Reading from the N-terminus, the 339-residue chain is Phenylalanine--tRNA ligase alpha subunit (339 aa).

Glu250 is a binding site for Mg(2+).

Belongs to the class-II aminoacyl-tRNA synthetase family. Phe-tRNA synthetase alpha subunit type 1 subfamily. As to quaternary structure, tetramer of two alpha and two beta subunits. It depends on Mg(2+) as a cofactor.

It localises to the cytoplasm. The enzyme catalyses tRNA(Phe) + L-phenylalanine + ATP = L-phenylalanyl-tRNA(Phe) + AMP + diphosphate + H(+). The sequence is that of Phenylalanine--tRNA ligase alpha subunit from Azobacteroides pseudotrichonymphae genomovar. CFP2.